The primary structure comprises 159 residues: MQLTHLNKQNNPTMVDVSDKHITTREAYASGVISMSEQAFESAINHTGKKGPITQTAIIAAIMGSKKTSEIIPMCHPLMINKINVDITPNPAEHSITLGVLVKCEGKTGVEMEALTGVSIGLLTIYDMLKAIDKSMVISDIALQSKSGGKSGDFVREDS.

Substrate is bound by residues 74-76 and 112-113; these read MCH and ME. Aspartate 127 is a catalytic residue.

The protein belongs to the MoaC family. As to quaternary structure, homohexamer; trimer of dimers.

It catalyses the reaction (8S)-3',8-cyclo-7,8-dihydroguanosine 5'-triphosphate = cyclic pyranopterin phosphate + diphosphate. It functions in the pathway cofactor biosynthesis; molybdopterin biosynthesis. In terms of biological role, catalyzes the conversion of (8S)-3',8-cyclo-7,8-dihydroguanosine 5'-triphosphate to cyclic pyranopterin monophosphate (cPMP). The protein is Cyclic pyranopterin monophosphate synthase of Helicobacter hepaticus (strain ATCC 51449 / 3B1).